The primary structure comprises 1227 residues: Splicing factor 3B subunit 3 (1227 aa).

The protein belongs to the RSE1 family. Identified in the spliceosome A complex; remains associated with the spliceosome throughout the splicing process. Component of the spliceosome B complex. Identified in the spliceosome C complex. Identified in the spliceosome E complex. Component of the U11/U12 snRNPs that are part of the U12-type spliceosome. Component of splicing factor SF3B complex. Identified in the SAGA transcription regulatory histone acetylation (HAT) complex; the interaction is RNA-independent.

It localises to the nucleus. Functionally, involved in pre-mRNA splicing as a component of the splicing factor SF3B complex, a constituent of the spliceosome. SF3B complex is required for 'A' complex assembly formed by the stable binding of U2 snRNP to the branchpoint sequence (BPS) in pre-mRNA. Sequence independent binding of SF3A/SF3B complex upstream of the branch site is essential, it may anchor U2 snRNP to the pre-mRNA. May also be involved in the assembly of the 'E' complex. Also belongs to the minor U12-dependent spliceosome, which is involved in the splicing of rare class of nuclear pre-mRNA intron. The chain is Splicing factor 3B subunit 3 from Drosophila melanogaster (Fruit fly).